A 347-amino-acid chain; its full sequence is D-fructose 1,6-bisphosphatase class 2/sedoheptulose 1,7-bisphosphatase (347 aa).

Aspartate 33, glutamate 57, aspartate 97, and glutamate 100 together coordinate Mn(2+). Substrate is bound by residues 100–102, tyrosine 131, 176–178, and 198–200; these read EGT, RKR, and DGD. Residue glutamate 225 coordinates Mn(2+).

It belongs to the FBPase class 2 family. In terms of assembly, homotetramer. Mn(2+) serves as cofactor.

It catalyses the reaction beta-D-fructose 1,6-bisphosphate + H2O = beta-D-fructose 6-phosphate + phosphate. It carries out the reaction D-sedoheptulose 1,7-bisphosphate + H2O = D-sedoheptulose 7-phosphate + phosphate. Its pathway is carbohydrate biosynthesis; Calvin cycle. Functionally, catalyzes the hydrolysis of fructose 1,6-bisphosphate (Fru 1,6-P2) and sedoheptulose 1,7-bisphosphate (Sed 1,7-P2) to fructose 6-phosphate and sedoheptulose 7-phosphate, respectively. The polypeptide is D-fructose 1,6-bisphosphatase class 2/sedoheptulose 1,7-bisphosphatase (Synechococcus sp. (strain JA-3-3Ab) (Cyanobacteria bacterium Yellowstone A-Prime)).